The sequence spans 366 residues: Polyprenyl transferase ausN (366 aa).

The next 8 helical transmembrane spans lie at 97–117 (VVGI…DLLL), 121–141 (LLLT…NDLI), 164–184 (LPTA…LFLF), 215–235 (LILV…GVEP), 239–259 (ILSS…IDLV), 287–307 (LAYS…LLGG), 308–328 (LRAP…WTFL), and 346–366 (SCLM…AVRV).

Belongs to the UbiA prenyltransferase family. It depends on Mg(2+) as a cofactor.

Its subcellular location is the membrane. It carries out the reaction 3,5-dimethylorsellinate + (2E,6E)-farnesyl diphosphate = (3R)-3-farnesyl-6-hydroxy-2,3,5-trimethyl-4-oxocyclohexa-1,5-diene-1-carboxylate + diphosphate + H(+). It functions in the pathway secondary metabolite biosynthesis; terpenoid biosynthesis. In terms of biological role, polyprenyl transferase; part of the gene cluster that mediates the biosynthesis of calidodehydroaustin, a fungal meroterpenoid. The first step of the pathway is the synthesis of 3,5-dimethylorsellinic acid by the polyketide synthase ausA. 3,5-dimethylorsellinic acid is then prenylated by the polyprenyl transferase ausN. Further epoxidation by the FAD-dependent monooxygenase ausM and cyclization by the probable terpene cyclase ausL lead to the formation of protoaustinoid A. Protoaustinoid A is then oxidized to spiro-lactone preaustinoid A3 by the combined action of the FAD-binding monooxygenases ausB and ausC, and the dioxygenase ausE. Acid-catalyzed keto-rearrangement and ring contraction of the tetraketide portion of preaustinoid A3 by ausJ lead to the formation of preaustinoid A4. The aldo-keto reductase ausK, with the help of ausH, is involved in the next step by transforming preaustinoid A4 into isoaustinone which is in turn hydroxylated by the P450 monooxygenase ausI to form austinolide. The cytochrome P450 monooxygenase ausG modifies austinolide to austinol. Austinol is further acetylated to austin by the O-acetyltransferase ausP, which spontaneously changes to dehydroaustin. The cytochrome P450 monooxygenase ausR then converts dehydroaustin is into 7-dehydrodehydroaustin. The hydroxylation catalyzed by ausR permits the O-acetyltransferase ausQ to add an additional acetyl group to the molecule, leading to the formation of acetoxydehydroaustin. The short chain dehydrogenase ausT catalyzes the reduction of the double bond present between carbon atoms 1 and 2 to convert 7-dehydrodehydroaustin into 1,2-dihydro-7-hydroxydehydroaustin. AusQ catalyzes not only an acetylation reaction but also the addition of the PKS ausV diketide product to 1,2-dihydro-7-hydroxydehydroaustin, forming precalidodehydroaustin. Finally, the iron/alpha-ketoglutarate-dependent dioxygenase converts precalidodehydroaustin into calidodehydroaustin. This chain is Polyprenyl transferase ausN, found in Aspergillus calidoustus.